The following is a 312-amino-acid chain: Putative ring-cleaving dioxygenase MhqO (312 aa).

VOC domains are found at residues 7-131 and 152-269; these read GIHH…IVER and GFGG…IATD. Fe cation is bound by residues histidine 10, histidine 217, and glutamate 265.

The protein belongs to the extradiol ring-cleavage dioxygenase family. Fe(2+) is required as a cofactor.

Its subcellular location is the cytoplasm. Functionally, putative ring-cleavage dioxygenase that may contribute to the degradation of aromatic compounds. The polypeptide is Putative ring-cleaving dioxygenase MhqO (mhqO) (Bacillus subtilis (strain 168)).